The sequence spans 165 residues: UPF0303 protein Rleg2_2653 (165 aa).

This sequence belongs to the UPF0303 family.

This is UPF0303 protein Rleg2_2653 from Rhizobium leguminosarum bv. trifolii (strain WSM2304).